Here is a 361-residue protein sequence, read N- to C-terminus: RNA 3'-terminal phosphate cyclase (361 aa).

Positions 105, 132, 295, 298, 299, and 321 each coordinate ATP. H321 (tele-AMP-histidine intermediate) is an active-site residue.

It belongs to the RNA 3'-terminal cyclase family. Type 1 subfamily.

The protein localises to the nucleus. It localises to the nucleoplasm. It catalyses the reaction a 3'-end 3'-phospho-ribonucleotide-RNA + ATP = a 3'-end 2',3'-cyclophospho-ribonucleotide-RNA + AMP + diphosphate. Its function is as follows. Catalyzes the conversion of 3'-phosphate to a 2',3'-cyclic phosphodiester at the end of RNA. The mechanism of action of the enzyme occurs in 3 steps: (A) adenylation of the enzyme by ATP; (B) transfer of adenylate to an RNA-N3'P to produce RNA-N3'PP5'A; (C) and attack of the adjacent 2'-hydroxyl on the 3'-phosphorus in the diester linkage to produce the cyclic end product. Likely functions in some aspects of cellular RNA processing. Function plays an important role in a RNA repair and splicing pathway which controls axon regeneration in response to peripheral (PNS) and central nervous system (CNS) injury. In response to axotomy, negatively regulates splicing of Xbp1 which in turn activates downstream effectors which inhibit axon regeneration, including down-regulating the microtubule regulators ringer and futsch. The sequence is that of RNA 3'-terminal phosphate cyclase from Drosophila melanogaster (Fruit fly).